The chain runs to 838 residues: Ribonucleoside-diphosphate reductase large subunit (838 aa).

The ATP-cone domain maps to lysine 6–glutamate 97. Residues lysine 10–arginine 11, glutamate 16–valine 22, threonine 58, and aspartate 62 contribute to the ATP site. Serine 227 is a GDP binding site. A disulfide bond links cysteine 228 and cysteine 454. DTTP-binding positions include aspartate 236–isoleucine 238, lysine 253, arginine 266, and alanine 273–glycine 274. Asparagine 437 contributes to the GDP binding site. The Proton acceptor role is filled by asparagine 437. Cysteine 439 (cysteine radical intermediate) is an active-site residue. Residues glutamate 441 and threonine 626 to threonine 629 contribute to the GDP site. Residue glutamate 441 is the Proton acceptor of the active site. A compositionally biased stretch (basic and acidic residues) spans lysine 780–histidine 794. The tract at residues lysine 780–serine 838 is disordered.

The protein belongs to the ribonucleoside diphosphate reductase large chain family. Heterodimer of a large and a small subunit.

The catalysed reaction is a 2'-deoxyribonucleoside 5'-diphosphate + [thioredoxin]-disulfide + H2O = a ribonucleoside 5'-diphosphate + [thioredoxin]-dithiol. The enzyme catalyses dCDP + [thioredoxin]-disulfide + H2O = CDP + [thioredoxin]-dithiol. Under complex allosteric control mediated by deoxynucleoside triphosphates and ATP binding to separate specificity and activation sites on the large subunit. The type of nucleotide bound at the specificity site determines substrate preference. It seems probable that ATP makes the enzyme reduce CDP and UDP, dGTP favors ADP reduction and dTTP favors GDP reduction. Stimulated by ATP and inhibited by dATP binding to the activity site. In terms of biological role, provides the precursors necessary for DNA synthesis. Catalyzes the rate limiting step in the de novo synthesis of deoxyribonucleotides by directly reducing ribonucleotides to the corresponding deoxyribonucleotides. The chain is Ribonucleoside-diphosphate reductase large subunit (RNR1) from Trypanosoma brucei brucei.